We begin with the raw amino-acid sequence, 872 residues long: MKELSSAQIRQMWLDFWKSKGHCVEPSANLVPVNDPTLLWINSGVATLKKYFDGSVIPENPRITNAQKSIRTNDIENVGKTARHHTMFEMLGNFSIGDYFRDEAIEWGFELLTSPDWFDFPKDKLYMTYYPDDKDSYNRWIACGVEPSHLVPIEDNFWEIGAGPSGPDTEIFFDRGEDFDPENIGLRLLAEDIENDRYIEIWNIVLSQFNADPAVPRSEYKELPNKNIDTGAGLERLAAVMQGAKTNFETDLFMPIIREVEKLSGKTYNPDGDNMSFKVIADHIRALSFAIGDGALPGNEGRGYVLRRLLRRAVMHGRRLGINETFLYKLVPTVGQIMESYYPEVLEKHDFIEKIVKREEETFARTIDAGSGHLDSLLAQLKAEGKDTLEGKDIFKLYDTYGFPVELTEELAEDAGYKIDHEGFKSAMKEQQDRARAAVVKGGSMGMQNETLAGIVEESRFEYDTYSLESSLSVIIADNERTEAVSEGQALLVFAQTPFYAEMGGQVADTGRIKNDKGDTVAEVVDVQKAPNGQPLHTVNVLASLSVGTNYTLEINKERRLAVEKNHTATHLLHAALHNVIGEHATQAGSLNEEEFLRFDFTHFEAVSNEELRHIEQEVNEQIWNALTITTTETDVETAKEMGAMALFGEKYGKVVRVVQIGNYSVELCGGTHLNNSSEIGLFKIVKEEGIGSGTRRIIAVTGRQAFEAYRNQEDALKEIAATVKAPQLKDAAAKVQALSDSLRDLQKENAELKEKAAAAAAGDVFKDVQEAKGVRFIASQVDVADAGALRTFADNWKQKDYSDVLVLVAAIGEKVNVLVASKTKDVHAGNMIKELAPIVAGRGGGKPDMAMAGGSDASKIAELLAAVAETV.

The Zn(2+) site is built by histidine 567, histidine 571, cysteine 669, and histidine 673.

Belongs to the class-II aminoacyl-tRNA synthetase family. Zn(2+) is required as a cofactor.

The protein resides in the cytoplasm. The catalysed reaction is tRNA(Ala) + L-alanine + ATP = L-alanyl-tRNA(Ala) + AMP + diphosphate. Catalyzes the attachment of alanine to tRNA(Ala) in a two-step reaction: alanine is first activated by ATP to form Ala-AMP and then transferred to the acceptor end of tRNA(Ala). Also edits incorrectly charged Ser-tRNA(Ala) and Gly-tRNA(Ala) via its editing domain. This chain is Alanine--tRNA ligase, found in Streptococcus pyogenes serotype M12 (strain MGAS2096).